Consider the following 196-residue polypeptide: Proteasome subunit beta 1 (196 aa).

The propeptide at 1–6 (MEELPA) is removed in mature form; by autocatalysis. Catalysis depends on Thr7, which acts as the Nucleophile.

Belongs to the peptidase T1B family. As to quaternary structure, the 20S proteasome core is composed of 14 alpha and 14 beta subunits that assemble into four stacked heptameric rings, resulting in a barrel-shaped structure. The two inner rings, each composed of seven catalytic beta subunits, are sandwiched by two outer rings, each composed of seven alpha subunits. The catalytic chamber with the active sites is on the inside of the barrel. Has a gated structure, the ends of the cylinder being occluded by the N-termini of the alpha-subunits. Is capped at one or both ends by the proteasome regulatory ATPase, PAN.

Its subcellular location is the cytoplasm. The catalysed reaction is Cleavage of peptide bonds with very broad specificity.. Its activity is regulated as follows. The formation of the proteasomal ATPase PAN-20S proteasome complex, via the docking of the C-termini of PAN into the intersubunit pockets in the alpha-rings, triggers opening of the gate for substrate entry. Interconversion between the open-gate and close-gate conformations leads to a dynamic regulation of the 20S proteasome proteolysis activity. In terms of biological role, component of the proteasome core, a large protease complex with broad specificity involved in protein degradation. The sequence is that of Proteasome subunit beta 1 from Saccharolobus solfataricus (strain ATCC 35092 / DSM 1617 / JCM 11322 / P2) (Sulfolobus solfataricus).